Reading from the N-terminus, the 107-residue chain is Keratin, type I cytoskeletal 20 (107 aa).

Residues 1–7 (GNLWVGN) form a head region. The tract at residues 8–43 (EKMTMKNLNDRLASYLEKVRSLEQSNSKFELQIKQW) is coil 1A. One can recognise an IF rod domain in the interval 8-107 (EKMTMKNLND…ETERGIRLAV (100 aa)). Residues 44 to 61 (YESNTPGISRDHSAYLQQ) form a linker 1 region. Residues 62 to 107 (IQDLRNQIRDAQLQNARCVLQIDNAKLAAEDFRLKYETERGIRLAV) are coil 1B.

The protein belongs to the intermediate filament family. As to quaternary structure, heterotetramer of two type I and two type II keratins. Associates with KRT8.

Functionally, plays a significant role in maintaining keratin filament organization in intestinal epithelia. When phosphorylated, plays a role in the secretion of mucin in the small intestine. The sequence is that of Keratin, type I cytoskeletal 20 from Sus scrofa (Pig).